The following is a 259-amino-acid chain: 5'-nucleotidase SurE (259 aa).

A divalent metal cation is bound by residues D15, D16, S46, and N102.

The protein belongs to the SurE nucleotidase family. It depends on a divalent metal cation as a cofactor.

It is found in the cytoplasm. The catalysed reaction is a ribonucleoside 5'-phosphate + H2O = a ribonucleoside + phosphate. Its function is as follows. Nucleotidase that shows phosphatase activity on nucleoside 5'-monophosphates. This is 5'-nucleotidase SurE from Chlorobium luteolum (strain DSM 273 / BCRC 81028 / 2530) (Pelodictyon luteolum).